We begin with the raw amino-acid sequence, 192 residues long: Adenylate kinase (192 aa).

10-18 (GVPGVGGTT) lines the ATP pocket.

It belongs to the archaeal adenylate kinase family. Monomer.

It is found in the cytoplasm. The catalysed reaction is AMP + ATP = 2 ADP. The polypeptide is Adenylate kinase (adkA) (Methanotorris igneus (Methanococcus igneus)).